Here is a 94-residue protein sequence, read N- to C-terminus: Small ribosomal subunit protein bS6 (94 aa).

This sequence belongs to the bacterial ribosomal protein bS6 family.

Functionally, binds together with bS18 to 16S ribosomal RNA. This chain is Small ribosomal subunit protein bS6, found in Clostridium botulinum (strain Loch Maree / Type A3).